The following is a 1040-amino-acid chain: Vacuolar membrane protease (1040 aa).

Over 1-9 (MINPISFRP) the chain is Cytoplasmic. A helical membrane pass occupies residues 10-30 (GPVTFWTTLIYLALLIPIVII). Residues 31–405 (NEEPPAAPKT…SFVLFGLRGM (375 aa)) lie on the Vacuolar side of the membrane. N-linked (GlcNAc...) asparagine glycosylation is found at N48, N117, N120, and N129. Positions 186 and 198 each coordinate Zn(2+). E232 functions as the Proton acceptor in the catalytic mechanism. Zn(2+) contacts are provided by E233, E258, and H331. Residues 406 to 426 (FAWSLTLLIATPLILVGITWL) traverse the membrane as a helical segment. The Cytoplasmic segment spans residues 427 to 436 (LRNLDKDYFF). Residues 437–456 (TSTVKTKEHPEYEAVPIGGW) form a helical membrane-spanning segment. The Vacuolar portion of the chain corresponds to 457-462 (KGFFRW). The chain crosses the membrane as a helical span at residues 463–483 (AMMVSIFYFSFWMIMRGANFV). At 484 to 490 (RPSALHR) the chain is on the cytoplasmic side. The chain crosses the membrane as a helical span at residues 491-511 (GYANLWLFVFGWIVLVAVTAL). Over 512 to 521 (EDRRRIAAGY) the chain is Vacuolar. The chain crosses the membrane as a helical span at residues 522 to 542 (IFVFLESAIFLSCLISFVELL). The Cytoplasmic portion of the chain corresponds to 543–715 (ALPRKSAYAL…YEHEQDWSGH (173 aa)). Residues 563-680 (HSGYQGYRDS…NGTNDRGRTT (118 aa)) form a disordered region. 2 stretches are compositionally biased toward low complexity: residues 577–594 (SSGA…PSSP) and 616–626 (APSVAAHSSQP). Residues 636–647 (GRSTSAPIPSTT) show a composition bias toward polar residues. The segment covering 650–661 (DEDESEDDDDEA) has biased composition (acidic residues). A helical membrane pass occupies residues 716 to 736 (LPSWAWFFQFLLLGPFMIILA). The Vacuolar portion of the chain corresponds to 737–758 (AQTGLMLTDAVYQTGSDGSKLF). A helical transmembrane segment spans residues 759 to 779 (TPYLMIFFFTLLLILPLTPFI). The Cytoplasmic segment spans residues 780 to 785 (HRVTHH). A helical membrane pass occupies residues 786-806 (IPVFLLVVFIVTLTYNLIAFP). The Vacuolar portion of the chain corresponds to 807-1040 (FSANNRYKAF…VEGRKAFKIV (234 aa)). The N-linked (GlcNAc...) asparagine glycan is linked to N900.

It belongs to the peptidase M28 family. Zn(2+) is required as a cofactor.

The protein resides in the vacuole membrane. In terms of biological role, may be involved in vacuolar sorting and osmoregulation. The protein is Vacuolar membrane protease of Sordaria macrospora (strain ATCC MYA-333 / DSM 997 / K(L3346) / K-hell).